Here is a 93-residue protein sequence, read N- to C-terminus: Stage III sporulation protein D (93 aa).

An HTH deoR-type domain is found at Y4 to T75. Residues K21–D40 constitute a DNA-binding region (H-T-H motif).

Its function is as follows. This protein regulates the transcription of sigK, which encodes mother cell chamber RNA polymerase sigma-factor (sigma K). The chain is Stage III sporulation protein D (spoIIID) from Bacillus subtilis (strain 168).